We begin with the raw amino-acid sequence, 3354 residues long: Cadherin-23 (3354 aa).

The N-terminal stretch at 1–23 (MGRHVATSCHVAWLLVLISGCWG) is a signal peptide. Residues 24-3064 (QVNRLPFFTN…SVRLPDDMSA (3041 aa)) are Extracellular-facing. Cadherin domains are found at residues 34–132 (HFFD…APTF), 133–236 (HNQP…DPIF), 237–348 (INLP…APEF), 349–460 (NSSE…RPIF), 461–561 (SQPL…VPTF), 562–671 (QKDA…PPTF), 672–784 (SKPA…APYY), 779–890 (KDAP…DPTF), 891–995 (QNLP…TPTF), 996–1102 (FPAV…RPIF), 1103–1208 (LQSS…APVF), 1210–1313 (QQQY…AVQF), 1314–1418 (SNAS…SPRF), 1420–1527 (FTSD…PPVI), 1529–1634 (SPFG…APMF), 1635–1744 (QQPH…VPTF), 1745–1851 (PRDY…DPVL), 1852–1959 (LNLP…HPLF), 1960–2069 (TKST…RPTF), 2070–2174 (SPAT…RPEF), 2175–2293 (LNPI…TPQF), 2297–2402 (GITY…NPIF), 2403–2509 (DQPS…RPQF), 2510–2611 (SKPQ…RPVF), 2614–2722 (PPNG…EPLF), 2729–2846 (SPQY…PPRF), and 2847–2975 (TKAE…EEEF). Asparagine 155 and asparagine 206 each carry an N-linked (GlcNAc...) asparagine glycan. 32 N-linked (GlcNAc...) asparagine glycosylation sites follow: asparagine 349, asparagine 393, asparagine 434, asparagine 466, asparagine 472, asparagine 652, asparagine 694, asparagine 765, asparagine 810, asparagine 827, asparagine 941, asparagine 1001, asparagine 1018, asparagine 1171, asparagine 1282, asparagine 1315, asparagine 1473, asparagine 1534, asparagine 1651, asparagine 1667, asparagine 1818, asparagine 1857, asparagine 1889, asparagine 1902, asparagine 2013, asparagine 2050, asparagine 2129, asparagine 2168, asparagine 2195, asparagine 2263, asparagine 2357, and asparagine 2369. Residues asparagine 2616, asparagine 2749, asparagine 2808, asparagine 2877, asparagine 2896, asparagine 2941, and asparagine 2981 are each glycosylated (N-linked (GlcNAc...) asparagine). A helical transmembrane segment spans residues 3065–3085 (LQMAIIVLAILLFLAAMLFVL). The Cytoplasmic portion of the chain corresponds to 3086-3354 (MNWYYRTVHK…METPLEITEL (269 aa)).

In terms of assembly, antiparallel heterodimer with PCDH15. Interacts with USH1C and USH1G. As to expression, particularly strong expression in the retina. Found also in the cochlea.

It is found in the cell membrane. Its function is as follows. Cadherins are calcium-dependent cell adhesion proteins. They preferentially interact with themselves in a homophilic manner in connecting cells. CDH23 is required for establishing and/or maintaining the proper organization of the stereocilia bundle of hair cells in the cochlea and the vestibule during late embryonic/early postnatal development. It is part of the functional network formed by USH1C, USH1G, CDH23 and MYO7A that mediates mechanotransduction in cochlear hair cells. Required for normal hearing. The sequence is that of Cadherin-23 from Homo sapiens (Human).